Reading from the N-terminus, the 225-residue chain is Peroxiredoxin-2E-2, chloroplastic (225 aa).

A chloroplast-targeting transit peptide spans 1–42; it reads MAAPTAAALSTLSTASVTSGKRFITSSFSLSFSSRPLATGVR. The region spanning 63-225 is the Thioredoxin domain; sequence IAVGDKLPDA…SSAEEMLKAL (163 aa). Catalysis depends on Cys-111, which acts as the Cysteine sulfenic acid (-SOH) intermediate.

It belongs to the peroxiredoxin family. Prx5 subfamily. Monomer.

The protein localises to the plastid. It is found in the chloroplast stroma. The catalysed reaction is [glutaredoxin]-dithiol + a hydroperoxide = [glutaredoxin]-disulfide + an alcohol + H2O. In terms of biological role, thiol-specific peroxidase that catalyzes the reduction of hydrogen peroxide and organic hydroperoxides to water and alcohols, respectively. Plays a role in cell protection against oxidative stress by detoxifying peroxides. May be involved in chloroplast redox homeostasis. This chain is Peroxiredoxin-2E-2, chloroplastic (PRXIIE-2), found in Oryza sativa subsp. japonica (Rice).